The following is a 103-amino-acid chain: Somatostatin-2 (103 aa).

The signal sequence occupies residues 1–21 (MLGSAGTLLLLLLAWGARALS). A propeptide spanning residues 22 to 87 (QPDDNRITTG…VKFPRLSLRE (66 aa)) is cleaved from the precursor. The cysteines at positions 92 and 103 are disulfide-linked.

It belongs to the somatostatin family.

It is found in the secreted. Its function is as follows. Somatostatin inhibits the release of somatotropin. The polypeptide is Somatostatin-2 (sst2) (Pelophylax ridibundus (Marsh frog)).